A 192-amino-acid chain; its full sequence is Endoribonuclease YbeY (192 aa).

The Zn(2+) site is built by His109, His113, and His119. Positions 142-192 are disordered; it reads VGAALREGGPARAAETETSWTRSPTSTSTRSPSGSTARGTRARSSRAGSGR. Residues 159–180 are compositionally biased toward low complexity; it reads TSWTRSPTSTSTRSPSGSTARG.

This sequence belongs to the endoribonuclease YbeY family. Requires Zn(2+) as cofactor.

The protein resides in the cytoplasm. Functionally, single strand-specific metallo-endoribonuclease involved in late-stage 70S ribosome quality control and in maturation of the 3' terminus of the 16S rRNA. In Anaeromyxobacter sp. (strain Fw109-5), this protein is Endoribonuclease YbeY.